A 738-amino-acid chain; its full sequence is MENETHYAEAVIDNGSFGTRTIRFETGRLAKQAAGSAVAYLDDDTMVLSATTASKKPKENLDFFPLTVDVEERMYAAGKIPGSFFRREGRPSEDAILTCRLIDRPLRPSFKKGLRNEIQVVATIMALNPDHLYDVVAINAASASTQLAGLPFSGPIGGVRVALINGQWVAFPTHTELEDAVFDMVVAGRALEDGDVAIMMVEAEATEKTIQLVAGGAEAPTEEVVAAGLDAAKPFIKVLCKAQADLAAKAAKPTGEFPVFLDYQDDVLEALTAAVKSELSQALTIAGKQDREAELDRVKEIAAEKLLPQFEGREKEISAAYRSLTKSLVRERVIKDKVRIDGRGVTDIRTLAAEVEAIPRVHGSALFERGETQILGVTTLNMLRMEQQLDTLSPVTRKRYMHNYNFPPYSVGETGRVGSPKRREIGHGALAERAIVPVLPTREEFPYAIRQVSEALGSNGSTSMGSVCASTMSLLNAGVPLKAPVAGIAMGLISQEINGETHYVALTDILGAEDAFGDMDFKVAGTKEFVTALQLDTKLDGIPASVLAAALKQARDARLHILDVMMEAIDTPDEMSPNAPRIITVKIPVDKIGEVIGPKGKMINQIQEDTGAEITIEDDGTIYIGAQVGSQAEAARATINGIANPTMPEVGERYLGTVVKTTTFGAFVSLLPGKDGLLHISQIRKLAGGKRVENVEDVLGVGAKVQVEIAEIDSRGKLSLIPVVEGEGDDEKKDDTDK.

2 residues coordinate Mg(2+): Asp514 and Asp520. The region spanning 580–639 is the KH domain; the sequence is PRIITVKIPVDKIGEVIGPKGKMINQIQEDTGAEITIEDDGTIYIGAQVGSQAEAARATI. The S1 motif domain maps to 651 to 723; sequence GERYLGTVVK…SRGKLSLIPV (73 aa).

The protein belongs to the polyribonucleotide nucleotidyltransferase family. Mg(2+) is required as a cofactor.

It is found in the cytoplasm. The catalysed reaction is RNA(n+1) + phosphate = RNA(n) + a ribonucleoside 5'-diphosphate. In terms of biological role, involved in mRNA degradation. Catalyzes the phosphorolysis of single-stranded polyribonucleotides processively in the 3'- to 5'-direction. The chain is Polyribonucleotide nucleotidyltransferase from Streptomyces avermitilis (strain ATCC 31267 / DSM 46492 / JCM 5070 / NBRC 14893 / NCIMB 12804 / NRRL 8165 / MA-4680).